The following is a 424-amino-acid chain: Neurotensin receptor type 1 (424 aa).

At 1-67 the chain is on the extracellular side; the sequence is MHLNSSVQQG…TDIYSKVLVT (67 aa). Residues asparagine 4, asparagine 38, and asparagine 42 are each glycosylated (N-linked (GlcNAc...) asparagine). A helical transmembrane segment spans residues 68–88; the sequence is AVYLALFVVGTVGNSVTAFTL. Residues 89 to 102 lie on the Cytoplasmic side of the membrane; that stretch reads ARKKSLQSLQSTVH. The helical transmembrane segment at 103-122 threads the bilayer; it reads YHLGSLALSDLLILLLAMPV. Residues 123-142 are Extracellular-facing; sequence ELYNFIWVHHPWAFGDAGCR. Cysteines 141 and 224 form a disulfide. Residues 143–164 form a helical membrane-spanning segment; the sequence is GYYFLRDACTYATALNVASLSV. The Cytoplasmic portion of the chain corresponds to 165–184; it reads ERYLAICHPFKAKTLMSRSR. Residues 185–205 traverse the membrane as a helical segment; the sequence is TKKFISAIWLASALLAVPMLF. The Extracellular portion of the chain corresponds to 206-234; it reads TMGLQNRSADGQHPGGLVCTPTVDTATVK. Residue asparagine 211 is glycosylated (N-linked (GlcNAc...) asparagine). A helical membrane pass occupies residues 235 to 259; it reads VVIQVNTFMSFLFPMLIISILNTVI. Residues 260–308 lie on the Cytoplasmic side of the membrane; that stretch reads ANKLTVMVHQAAEQGRGVCTVGTHNSLEHSTFNMSIEPGRVQALRHGVL. Residues 309–330 form a helical membrane-spanning segment; it reads VLRAVVIAFVVCWLPYHVRRLM. The segment at 326–349 is neurotensin binding; sequence VRRLMFCYISDEQWTTFLFDFYHY. Residues 331–348 are Extracellular-facing; it reads FCYISDEQWTTFLFDFYH. A helical membrane pass occupies residues 349–369; sequence YFYMLTNALFYVSSAINPILY. Over 370-424 the chain is Cytoplasmic; it reads NLVSANFRQVFLSTLACLCPGWRRRRKKRPTFSRKPNSMSSNHAFSTSATRETLY. Residues cysteine 386 and cysteine 388 are each lipidated (S-palmitoyl cysteine). The interval 398–424 is disordered; the sequence is RPTFSRKPNSMSSNHAFSTSATRETLY. The segment covering 403–424 has biased composition (polar residues); that stretch reads RKPNSMSSNHAFSTSATRETLY.

The protein belongs to the G-protein coupled receptor 1 family. Neurotensin receptor subfamily. NTSR1 sub-subfamily. Interacts (palmitoylated form) with GNA11. In terms of processing, N-glycosylated. Post-translationally, palmitoylated; this is required for normal localization at membrane rafts and normal GNA11-mediated activation of down-stream signaling cascades. The palmitoylation level increases in response to neurotensin treatment.

The protein resides in the cell membrane. It localises to the membrane raft. Its function is as follows. G-protein coupled receptor for the tridecapeptide neurotensin (NTS). Signaling is effected via G proteins that activate a phosphatidylinositol-calcium second messenger system. Signaling leads to the activation of downstream MAP kinases and protects cells against apoptosis. This is Neurotensin receptor type 1 (Ntsr1) from Mus musculus (Mouse).